The sequence spans 220 residues: ATP-dependent dethiobiotin synthetase BioD (220 aa).

12–17 is an ATP binding site; that stretch reads DVGKTI. Thr-16 is a Mg(2+) binding site. The active site involves Lys-37. Residue Thr-41 coordinates substrate. Residues Asp-49, 107–110, 167–168, and 197–199 each bind ATP; these read EGAG, GS, and PAG. Mg(2+) contacts are provided by Asp-49 and Glu-107.

This sequence belongs to the dethiobiotin synthetase family. In terms of assembly, homodimer. Requires Mg(2+) as cofactor.

It is found in the cytoplasm. The enzyme catalyses (7R,8S)-7,8-diammoniononanoate + CO2 + ATP = (4R,5S)-dethiobiotin + ADP + phosphate + 3 H(+). It participates in cofactor biosynthesis; biotin biosynthesis; biotin from 7,8-diaminononanoate: step 1/2. In terms of biological role, catalyzes a mechanistically unusual reaction, the ATP-dependent insertion of CO2 between the N7 and N8 nitrogen atoms of 7,8-diaminopelargonic acid (DAPA, also called 7,8-diammoniononanoate) to form a ureido ring. This is ATP-dependent dethiobiotin synthetase BioD from Corynebacterium efficiens (strain DSM 44549 / YS-314 / AJ 12310 / JCM 11189 / NBRC 100395).